Reading from the N-terminus, the 69-residue chain is Trypsin/subtilisin inhibitor (69 aa).

Cys4 and Cys49 are disulfide-bonded.

The protein belongs to the protease inhibitor I13 (potato type I serine protease inhibitor) family.

Its function is as follows. Inhibitor of trypsin, chymotrypsin, subtilisin, etc. This is Trypsin/subtilisin inhibitor from Amaranthus caudatus (Love-lies-bleeding).